A 655-amino-acid polypeptide reads, in one-letter code: THO complex subunit 1 (655 aa).

Disordered stretches follow at residues 403–427 (ERPAETKPIRPSRKRQAPEDFLGKG) and 539–574 (PSEEIKTGEEDDDENGDNLLKDSNDSPSIQSKAVTN). Positions 415–431 (RKRQAPEDFLGKGPDRK) match the Nuclear localization signal motif. Residues 418 to 427 (QAPEDFLGKG) show a composition bias toward basic and acidic residues. The span at 563–574 (DSPSIQSKAVTN) shows a compositional bias: polar residues. Positions 573 to 655 (TNSQMDEIAA…NNIADNLSET (83 aa)) constitute a Death domain.

In terms of assembly, component of the THO complex. Expressed in the developing neuromast.

The protein resides in the nucleus. It is found in the nucleoplasm. The protein localises to the nucleus matrix. It localises to the cytoplasm. Its subcellular location is the cytosol. In terms of biological role, component of the THO subcomplex of the TREX complex which is thought to couple mRNA transcription, processing and nuclear export, and which specifically associates with spliced mRNA and not with unspliced pre-mRNA. Required for efficient export of polyadenylated RNA. The THOC1-THOC2-THOC3 core complex alone is sufficient to bind export factor NXF1-NXT1 and promote ATPase activity of DDX39B. TREX is recruited to spliced mRNAs by a transcription-independent mechanism, binds to mRNA upstream of the exon-junction complex (EJC) and is recruited in a splicing- and cap-dependent manner to a region near the 5' end of the mRNA where it functions in mRNA export to the cytoplasm via the TAP/NXF1 pathway. Regulates transcriptional elongation of a subset of genes. Involved in genome stability by preventing co-transcriptional R-loop formation. May play a role in hair cell formation, hence may be involved in hearing. Its function is as follows. Participates in an apoptotic pathway which is characterized by activation of caspase-6, increases in the expression of BAK1 and BCL2L1 and activation of NF-kappa-B. This pathway does not require p53/TP53, nor does the presence of p53/TP53 affect the efficiency of cell killing. Activates a G2/M cell cycle checkpoint prior to the onset of apoptosis. Apoptosis is inhibited by association with RB1. Essential for early embryonic development. Required for normal gene expression during postnatal testis development. The sequence is that of THO complex subunit 1 (thoc1) from Danio rerio (Zebrafish).